The following is an 88-amino-acid chain: Large ribosomal subunit protein uL23c (88 aa).

The protein belongs to the universal ribosomal protein uL23 family. Part of the 50S ribosomal subunit.

It is found in the plastid. It localises to the chloroplast. Functionally, binds to 23S rRNA. This Spirogyra maxima (Green alga) protein is Large ribosomal subunit protein uL23c (rpl23).